Here is a 228-residue protein sequence, read N- to C-terminus: UPF0134 protein MPN_137 (228 aa).

The protein belongs to the UPF0134 family.

The chain is UPF0134 protein MPN_137 from Mycoplasma pneumoniae (strain ATCC 29342 / M129 / Subtype 1) (Mycoplasmoides pneumoniae).